Reading from the N-terminus, the 350-residue chain is Ketol-acid reductoisomerase (NADP(+)) (350 aa).

Residues 3-183 (AQIWYEDDGD…GALRAGAIKT (181 aa)) form the KARI N-terminal Rossmann domain. Residues 26–29 (YGSQ), Arg-49, Ser-52, Ser-54, and 84–87 (DQYQ) each bind NADP(+). The active site involves His-109. An NADP(+)-binding site is contributed by Gly-135. Positions 184-327 (TFKEETETDL…PKLRAMFSWN (144 aa)) constitute a KARI C-terminal knotted domain. 4 residues coordinate Mg(2+): Asp-192, Glu-196, Glu-228, and Glu-232. Substrate is bound at residue Ser-253.

Belongs to the ketol-acid reductoisomerase family. The cofactor is Mg(2+).

The catalysed reaction is (2R)-2,3-dihydroxy-3-methylbutanoate + NADP(+) = (2S)-2-acetolactate + NADPH + H(+). It catalyses the reaction (2R,3R)-2,3-dihydroxy-3-methylpentanoate + NADP(+) = (S)-2-ethyl-2-hydroxy-3-oxobutanoate + NADPH + H(+). It participates in amino-acid biosynthesis; L-isoleucine biosynthesis; L-isoleucine from 2-oxobutanoate: step 2/4. The protein operates within amino-acid biosynthesis; L-valine biosynthesis; L-valine from pyruvate: step 2/4. In terms of biological role, involved in the biosynthesis of branched-chain amino acids (BCAA). Catalyzes an alkyl-migration followed by a ketol-acid reduction of (S)-2-acetolactate (S2AL) to yield (R)-2,3-dihydroxy-isovalerate. In the isomerase reaction, S2AL is rearranged via a Mg-dependent methyl migration to produce 3-hydroxy-3-methyl-2-ketobutyrate (HMKB). In the reductase reaction, this 2-ketoacid undergoes a metal-dependent reduction by NADPH to yield (R)-2,3-dihydroxy-isovalerate. This chain is Ketol-acid reductoisomerase (NADP(+)), found in Bifidobacterium animalis subsp. lactis (strain AD011).